Reading from the N-terminus, the 475-residue chain is Ribulose bisphosphate carboxylase large chain (475 aa).

Positions Met-1–Ser-2 are excised as a propeptide. N-acetylproline is present on Pro-3. Lys-14 is modified (N6,N6,N6-trimethyllysine). 2 residues coordinate substrate: Asn-123 and Thr-173. Lys-175 functions as the Proton acceptor in the catalytic mechanism. Lys-177 provides a ligand contact to substrate. 3 residues coordinate Mg(2+): Lys-201, Asp-203, and Glu-204. The residue at position 201 (Lys-201) is an N6-carboxylysine. Residue His-294 is the Proton acceptor of the active site. Substrate-binding residues include Arg-295, His-327, and Ser-379.

This sequence belongs to the RuBisCO large chain family. Type I subfamily. As to quaternary structure, heterohexadecamer of 8 large chains and 8 small chains; disulfide-linked. The disulfide link is formed within the large subunit homodimers. Mg(2+) serves as cofactor. Post-translationally, the disulfide bond which can form in the large chain dimeric partners within the hexadecamer appears to be associated with oxidative stress and protein turnover.

Its subcellular location is the plastid. It is found in the chloroplast. It catalyses the reaction 2 (2R)-3-phosphoglycerate + 2 H(+) = D-ribulose 1,5-bisphosphate + CO2 + H2O. The catalysed reaction is D-ribulose 1,5-bisphosphate + O2 = 2-phosphoglycolate + (2R)-3-phosphoglycerate + 2 H(+). In terms of biological role, ruBisCO catalyzes two reactions: the carboxylation of D-ribulose 1,5-bisphosphate, the primary event in carbon dioxide fixation, as well as the oxidative fragmentation of the pentose substrate in the photorespiration process. Both reactions occur simultaneously and in competition at the same active site. This is Ribulose bisphosphate carboxylase large chain from Zygnema circumcarinatum (Green alga).